Here is a 242-residue protein sequence, read N- to C-terminus: Type III pantothenate kinase (242 aa).

7–14 (DLGNSRFK) is a binding site for ATP. Substrate-binding positions include Tyr91 and 98 to 101 (GVDR). The active-site Proton acceptor is Asp100. Thr121 is an ATP binding site. Substrate is bound at residue Thr171.

Belongs to the type III pantothenate kinase family. In terms of assembly, homodimer. Requires NH4(+) as cofactor. K(+) serves as cofactor.

It localises to the cytoplasm. It catalyses the reaction (R)-pantothenate + ATP = (R)-4'-phosphopantothenate + ADP + H(+). It functions in the pathway cofactor biosynthesis; coenzyme A biosynthesis; CoA from (R)-pantothenate: step 1/5. Functionally, catalyzes the phosphorylation of pantothenate (Pan), the first step in CoA biosynthesis. This chain is Type III pantothenate kinase, found in Xylella fastidiosa (strain 9a5c).